Consider the following 332-residue polypeptide: MNLLNLPKIELHCHLDGSLRVETAIELAKKEGVKLDSYEYDKVKELLVIPKECNSLEDYLNRFALPVKLLQRAENLERVAFELMEDASKENVKYIEIRFAPLLHLEKGMTQKEVIESVIKGIRKAEELYDIKGNLILSCLRHHSIDSVYEVIEEGKNFIGKGVVAIDLAGGELEGFVKPYEEVMKLARESGFRVTIHAGETGYGKNVRDAIELLGAERIGHGLFIFNDEEAYNLVKEKGVTLEMCPKSNIDTKGVNKYEDHPIYKYHKDNIRVNLSTDNRTVSNINLTEEFENVHKTFNIDFEDYKKIYLNSVEASFCSEELKEKLKLSIII.

Positions 12 and 14 each coordinate Zn(2+). Residues histidine 14, aspartate 16, and glycine 170 each coordinate substrate. Histidine 197 contacts Zn(2+). Glutamate 200 serves as the catalytic Proton donor. Residue aspartate 278 participates in Zn(2+) binding.

It belongs to the metallo-dependent hydrolases superfamily. Adenosine and AMP deaminases family. Adenosine deaminase subfamily. Requires Zn(2+) as cofactor.

It catalyses the reaction adenosine + H2O + H(+) = inosine + NH4(+). The enzyme catalyses 2'-deoxyadenosine + H2O + H(+) = 2'-deoxyinosine + NH4(+). Functionally, catalyzes the hydrolytic deamination of adenosine and 2-deoxyadenosine. The sequence is that of Adenosine deaminase from Clostridium perfringens (strain 13 / Type A).